A 176-amino-acid polypeptide reads, in one-letter code: Ribosome rescue factor SmrB (176 aa).

The region spanning 93–168 is the Smr domain; it reads LDLHGYRQSE…GDAALLVLID (76 aa).

The protein belongs to the SmrB family. Associates with collided ribosomes, but not with correctly translating polysomes.

Its function is as follows. Acts as a ribosome collision sensor. Detects stalled/collided disomes (pairs of ribosomes where the leading ribosome is stalled and a second ribosome has collided with it) and endonucleolytically cleaves mRNA at the 5' boundary of the stalled ribosome. Stalled/collided disomes form a new interface (primarily via the 30S subunits) that binds SmrB. Cleaved mRNA becomes available for tmRNA ligation, leading to ribosomal subunit dissociation and rescue of stalled ribosomes. This Shewanella putrefaciens (strain CN-32 / ATCC BAA-453) protein is Ribosome rescue factor SmrB.